A 438-amino-acid polypeptide reads, in one-letter code: sn-glycerol-3-phosphate-binding periplasmic protein UgpB (438 aa).

The N-terminal stretch at Met1–Ala23 is a signal peptide. Sn-glycerol 3-phosphate is bound by residues Tyr65, Glu89, Ser144, Ser270, Gly307, Tyr346, and Arg397.

This sequence belongs to the bacterial solute-binding protein 1 family. As to quaternary structure, the complex is composed of two ATP-binding proteins (UgpC), two transmembrane proteins (UgpA and UgpE) and a solute-binding protein (UgpB).

The protein resides in the periplasm. Functionally, part of the ABC transporter complex UgpBAEC involved in sn-glycerol-3-phosphate (G3P) import. Binds G3P. This chain is sn-glycerol-3-phosphate-binding periplasmic protein UgpB (ugpB), found in Escherichia coli O157:H7.